We begin with the raw amino-acid sequence, 406 residues long: Protein translocase subunit SecD (406 aa).

The next 6 membrane-spanning stretches (helical) occupy residues 8-28 (IVIL…NPIN), 240-260 (MAAM…YRVA), 262-282 (FVAD…MCAI), 289-309 (PGIA…VIIF), 334-354 (FPAI…LFFF), and 361-381 (GFAV…IFIT).

This sequence belongs to the SecD/SecF family. SecD subfamily. Forms a complex with SecF. Part of the essential Sec protein translocation apparatus which comprises SecA, SecYEG and auxiliary proteins SecDF. Other proteins may also be involved.

The protein localises to the cell inner membrane. Functionally, part of the Sec protein translocase complex. Interacts with the SecYEG preprotein conducting channel. SecDF uses the proton motive force (PMF) to complete protein translocation after the ATP-dependent function of SecA. This chain is Protein translocase subunit SecD, found in Sebaldella termitidis (strain ATCC 33386 / NCTC 11300).